The following is a 144-amino-acid chain: Large ribosomal subunit protein uL15 (144 aa).

The disordered stretch occupies residues 1–57 (MKLNDLSPAPGSRREKHRPGRGIGSGLGKTGGRGHKGQSSRSGGTIAPGFEGGQQPL). A compositionally biased stretch (gly residues) spans 21–31 (RGIGSGLGKTG).

Belongs to the universal ribosomal protein uL15 family. Part of the 50S ribosomal subunit.

In terms of biological role, binds to the 23S rRNA. The sequence is that of Large ribosomal subunit protein uL15 from Pseudomonas savastanoi pv. phaseolicola (strain 1448A / Race 6) (Pseudomonas syringae pv. phaseolicola (strain 1448A / Race 6)).